Reading from the N-terminus, the 271-residue chain is Phosphonates import ATP-binding protein PhnC 2 (271 aa).

The ABC transporter domain occupies 2–246 (LTVDNLEKTY…ARDEIYRGGE (245 aa)). 35-42 (GPSGAGKS) provides a ligand contact to ATP. Residues 243–254 (RGGESIADREEP) show a composition bias toward basic and acidic residues. The disordered stretch occupies residues 243–271 (RGGESIADREEPSAGNSTDADDVIAERGD).

This sequence belongs to the ABC transporter superfamily. Phosphonates importer (TC 3.A.1.9.1) family. As to quaternary structure, the complex is composed of two ATP-binding proteins (PhnC), two transmembrane proteins (PhnE) and a solute-binding protein (PhnD).

The protein resides in the cell membrane. It carries out the reaction phosphonate(out) + ATP + H2O = phosphonate(in) + ADP + phosphate + H(+). Part of the ABC transporter complex PhnCDE involved in phosphonates import. Responsible for energy coupling to the transport system. This is Phosphonates import ATP-binding protein PhnC 2 from Haloarcula marismortui (strain ATCC 43049 / DSM 3752 / JCM 8966 / VKM B-1809) (Halobacterium marismortui).